Reading from the N-terminus, the 937-residue chain is Diacylglycerol kinase theta (937 aa).

Residues 1–48 (MATAAESGARTWPGSGSPRLGSPAGSPVLGISGRARPGSGPERTGRAI) form a disordered region. Residues Ser22 and Ser26 each carry the phosphoserine modification. 3 consecutive Phorbol-ester/DAG-type zinc fingers follow at residues 54–102 (GHSF…KTPC), 115–162 (AHCF…CSDC), and 177–228 (HHHW…TPEC). Residues 359-378 (GKAGTTEEETSKDSGPGDSV) are disordered. The 100-residue stretch at 390 to 489 (TQEILKIYPD…TRFYVAEARA (100 aa)) folds into the Ras-associating domain. 2 short sequence motifs (LXXLL motif) span residues 550 to 554 (LYMLA) and 569 to 573 (LPDVL). In terms of domain architecture, DAGKc spans 579–716 (PDCCPLLVFV…MDRWTILLDA (138 aa)). Positions 911–937 (AKQKPRKAGAIRDTRVDTLPAPEGNPL) are disordered.

The protein belongs to the eukaryotic diacylglycerol kinase family. Interacts with RHOA (constitutively activated, GTP-bound); the interaction inhibits DGKQ. Interacts with PRKCE. Interacts with PRKCH. Interacts with PLCB1. Interacts with NR5A1; the interaction requires both LXXLL motifs in DGKQ and is required for full phosphatidic acid-mediated activation of NR5A1. Post-translationally, phosphorylated by PRKCE and PRKCH in vitro. As to expression, widely expressed with higher expression in the brain and, to a lesser extent, in the small intestine, duodenum, and liver. In brain, expressed in gray matter. Expression is most intense in the cerebellar cortex and hippocampus, while moderate expression is seen in the olfactory bulb neuronal layers and brain stem nuclei. In the cerebellar cortex, equally expressed in both the Purkinje cell somata and the granule cells.

It localises to the cytoplasm. It is found in the cytosol. Its subcellular location is the cell membrane. The protein resides in the synapse. The protein localises to the cytoskeleton. It localises to the nucleus. It is found in the nucleus speckle. Its subcellular location is the nucleus matrix. The enzyme catalyses a 1,2-diacyl-sn-glycerol + ATP = a 1,2-diacyl-sn-glycero-3-phosphate + ADP + H(+). It carries out the reaction a 1-O-alkyl-sn-glycerol + ATP = a 1-O-alkyl-sn-glycero-3-phosphate + ADP + H(+). It catalyses the reaction 1-O-alkyl-2-acyl-sn-glycerol + ATP = 1-O-alkyl-2-acyl-sn-glycero-3-phosphate + ADP + H(+). The catalysed reaction is 1,2-di-(9Z-octadecenoyl)-sn-glycerol + ATP = 1,2-di-(9Z-octadecenoyl)-sn-glycero-3-phosphate + ADP + H(+). The enzyme catalyses 1-O-hexadecyl-sn-glycerol + ATP = 1-O-hexadecyl-sn-glycero-3-phosphate + ADP + H(+). It carries out the reaction 1-O-hexadecyl-2-acetyl-sn-glycerol + ATP = 1-O-hexadecyl-2-acetyl-sn-glycero-3-phosphate + ADP + H(+). It catalyses the reaction 1-octadecanoyl-2-(5Z,8Z,11Z,14Z-eicosatetraenoyl)-sn-glycerol + ATP = 1-octadecanoyl-2-(5Z,8Z,11Z,14Z-eicosatetraenoyl)-sn-glycero-3-phosphate + ADP + H(+). It functions in the pathway lipid metabolism; glycerolipid metabolism. Its activity is regulated as follows. Activated by phosphatidylserine. Diacylglycerol kinase that converts diacylglycerol/DAG into phosphatidic acid/phosphatidate/PA and regulates the respective levels of these two bioactive lipids. Thereby, acts as a central switch between the signaling pathways activated by these second messengers with different cellular targets and opposite effects in numerous biological processes. Within the adrenocorticotropic hormone signaling pathway, produces phosphatidic acid which in turn activates NR5A1 and subsequent steroidogenic gene transcription. Also functions downstream of the nerve growth factor signaling pathway being specifically activated in the nucleus by the growth factor. Through its diacylglycerol activity also regulates synaptic vesicle endocytosis. In Rattus norvegicus (Rat), this protein is Diacylglycerol kinase theta.